Here is a 541-residue protein sequence, read N- to C-terminus: CTP synthase (541 aa).

Residues 1 to 271 are amidoligase domain; the sequence is MVGKLNPTRF…DTQILKHFDV (271 aa). Ser19 lines the CTP pocket. A UTP-binding site is contributed by Ser19. Residues 20–25 and Asp77 contribute to the ATP site; that span reads SLGKGL. Asp77 and Glu145 together coordinate Mg(2+). CTP-binding positions include 152–154, 192–197, and Lys228; these read DIE and KTKPTQ. Residues 192–197 and Lys228 contribute to the UTP site; that span reads KTKPTQ. Positions 296–537 constitute a Glutamine amidotransferase type-1 domain; the sequence is VIAIVGKYVT…VTSTLQVKKA (242 aa). Gly355 is an L-glutamine binding site. Catalysis depends on Cys382, which acts as the Nucleophile; for glutamine hydrolysis. L-glutamine-binding positions include 383 to 386, Glu406, and Arg465; that span reads LGMQ. Residues His510 and Glu512 contribute to the active site.

It belongs to the CTP synthase family. Homotetramer.

It carries out the reaction UTP + L-glutamine + ATP + H2O = CTP + L-glutamate + ADP + phosphate + 2 H(+). It catalyses the reaction L-glutamine + H2O = L-glutamate + NH4(+). The catalysed reaction is UTP + NH4(+) + ATP = CTP + ADP + phosphate + 2 H(+). It functions in the pathway pyrimidine metabolism; CTP biosynthesis via de novo pathway; CTP from UDP: step 2/2. With respect to regulation, allosterically activated by GTP, when glutamine is the substrate; GTP has no effect on the reaction when ammonia is the substrate. The allosteric effector GTP functions by stabilizing the protein conformation that binds the tetrahedral intermediate(s) formed during glutamine hydrolysis. Inhibited by the product CTP, via allosteric rather than competitive inhibition. Catalyzes the ATP-dependent amination of UTP to CTP with either L-glutamine or ammonia as the source of nitrogen. Regulates intracellular CTP levels through interactions with the four ribonucleotide triphosphates. This chain is CTP synthase, found in Anaplasma phagocytophilum (strain HZ).